The following is a 630-amino-acid chain: Biosynthetic arginine decarboxylase (630 aa).

An N6-(pyridoxal phosphate)lysine modification is found at lysine 99. 279 to 289 (FDVGGGLGVDY) lines the substrate pocket.

This sequence belongs to the Orn/Lys/Arg decarboxylase class-II family. SpeA subfamily. Mg(2+) is required as a cofactor. Pyridoxal 5'-phosphate serves as cofactor.

It catalyses the reaction L-arginine + H(+) = agmatine + CO2. The protein operates within amine and polyamine biosynthesis; agmatine biosynthesis; agmatine from L-arginine: step 1/1. Catalyzes the biosynthesis of agmatine from arginine. This Neisseria meningitidis serogroup B (strain ATCC BAA-335 / MC58) protein is Biosynthetic arginine decarboxylase.